Here is a 368-residue protein sequence, read N- to C-terminus: Endophilin-A2 (368 aa).

Positions 1–21 (MSVAGLKKQFYKASQLVSEKV) are membrane-binding amphipathic helix. The BAR domain occupies 18–249 (SEKVGGAEGT…LKRRVREASS (232 aa)). The interval 60 to 87 (PNPASRAKLTMLNTVSKIRGQVKNPGYP) is required for dimerization upon membrane association. A coiled-coil region spans residues 180 to 250 (DEELRQALEK…KRRVREASSR (71 aa)). The segment at 218-254 (LVDAQLDYHRQAVQILEELADKLKRRVREASSRPKRE) is interaction with ARC. Positions 244-307 (VREASSRPKR…MPSKSMPPLD (64 aa)) are disordered. Basic and acidic residues predominate over residues 245-263 (REASSRPKREFKPRPREPF). Residues serine 288 and serine 292 each carry the phosphoserine modification. The SH3 domain occupies 306–365 (LDQPSCKALYDFEPENDGELGFREGDLITLTNQIDENWYEGMLHGQSGFFPLSYVQVLVP). Tyrosine 315 is modified (phosphotyrosine).

The protein belongs to the endophilin family. In terms of assembly, interacts with ARC, SYNJ1 and DNM1. Interacts with PDCD6IP. Interacts with BIN2.

The protein resides in the cytoplasm. It localises to the early endosome membrane. It is found in the cell projection. Its subcellular location is the podosome. Implicated in endocytosis. May recruit other proteins to membranes with high curvature. In Mus musculus (Mouse), this protein is Endophilin-A2 (Sh3gl1).